An 803-amino-acid polypeptide reads, in one-letter code: Leucine--tRNA ligase (803 aa).

Residues 40-51 (PYPSGAGLHVGH) carry the 'HIGH' region motif. The 'KMSKS' region motif lies at 575 to 579 (KMSKS). An ATP-binding site is contributed by K578.

Belongs to the class-I aminoacyl-tRNA synthetase family.

The protein localises to the cytoplasm. It carries out the reaction tRNA(Leu) + L-leucine + ATP = L-leucyl-tRNA(Leu) + AMP + diphosphate. The sequence is that of Leucine--tRNA ligase from Listeria monocytogenes serotype 4b (strain F2365).